Consider the following 268-residue polypeptide: Ribosomal RNA small subunit methyltransferase A (268 aa).

6 residues coordinate S-adenosyl-L-methionine: Asn11, Leu13, Gly37, Glu58, Asp86, and Asn104.

Belongs to the class I-like SAM-binding methyltransferase superfamily. rRNA adenine N(6)-methyltransferase family. RsmA subfamily.

It is found in the cytoplasm. It catalyses the reaction adenosine(1518)/adenosine(1519) in 16S rRNA + 4 S-adenosyl-L-methionine = N(6)-dimethyladenosine(1518)/N(6)-dimethyladenosine(1519) in 16S rRNA + 4 S-adenosyl-L-homocysteine + 4 H(+). In terms of biological role, specifically dimethylates two adjacent adenosines (A1518 and A1519) in the loop of a conserved hairpin near the 3'-end of 16S rRNA in the 30S particle. May play a critical role in biogenesis of 30S subunits. In Campylobacter fetus subsp. fetus (strain 82-40), this protein is Ribosomal RNA small subunit methyltransferase A.